The chain runs to 252 residues: tRNA (guanine-N(1)-)-methyltransferase (252 aa).

S-adenosyl-L-methionine contacts are provided by residues glycine 116 and 135 to 140 (LGDYVL).

Belongs to the RNA methyltransferase TrmD family. As to quaternary structure, homodimer.

It is found in the cytoplasm. It catalyses the reaction guanosine(37) in tRNA + S-adenosyl-L-methionine = N(1)-methylguanosine(37) in tRNA + S-adenosyl-L-homocysteine + H(+). In terms of biological role, specifically methylates guanosine-37 in various tRNAs. This chain is tRNA (guanine-N(1)-)-methyltransferase, found in Limosilactobacillus fermentum (strain NBRC 3956 / LMG 18251) (Lactobacillus fermentum).